Consider the following 631-residue polypeptide: Nucleoside triphosphatase I (631 aa).

The region spanning 42 to 204 (FLGLDSMHSL…TMLVNLLRPG (163 aa)) is the Helicase ATP-binding domain. Residue 55–62 (HETGVGKT) participates in ATP binding. The short motif at 141–144 (DECH) is the DEXH box element. The Helicase C-terminal domain occupies 367–532 (KFIDVCLGIL…EFVQLFRVFK (166 aa)). Residues 457–524 (DIFILDMTWN…EIIQSKSKEF (68 aa)) form a binding to the cap-specific mRNA (nucleoside-2'-O-)-methyltransferase region.

It belongs to the helicase family. NPH I subfamily. In terms of assembly, monomer. Interacts (via C-terminus) with RAP94/OPG109 (via N-terminus). Interacts with the cap-specific mRNA (nucleoside-2'-O-)-methyltransferase OPG102.

The protein resides in the virion. The catalysed reaction is a ribonucleoside 5'-triphosphate + H2O = a ribonucleoside 5'-diphosphate + phosphate + H(+). Its function is as follows. DNA-dependent ATPase that acts as a 5' to 3' translocase on single-stranded DNA and thereby plays a role in transcription termination of viral early genes. Uses forward translocation in concert with the viral RNA polymerase RAP94/OPG109 subunit and the capping enzyme/VTF to catalyze release of UUUUUNU-containing nascent RNA from the elongation complex. In addition, acts as a positive elongation factor to assist transcription through problematic sequences. In Bos taurus (Bovine), this protein is Nucleoside triphosphatase I (OPG123).